A 281-amino-acid polypeptide reads, in one-letter code: 4-diphosphocytidyl-2-C-methyl-D-erythritol kinase (281 aa).

K15 is a catalytic residue. 98–108 (PTGAGLGGGSS) is an ATP binding site. D140 is an active-site residue.

This sequence belongs to the GHMP kinase family. IspE subfamily.

The catalysed reaction is 4-CDP-2-C-methyl-D-erythritol + ATP = 4-CDP-2-C-methyl-D-erythritol 2-phosphate + ADP + H(+). It functions in the pathway isoprenoid biosynthesis; isopentenyl diphosphate biosynthesis via DXP pathway; isopentenyl diphosphate from 1-deoxy-D-xylulose 5-phosphate: step 3/6. Its function is as follows. Catalyzes the phosphorylation of the position 2 hydroxy group of 4-diphosphocytidyl-2C-methyl-D-erythritol. This chain is 4-diphosphocytidyl-2-C-methyl-D-erythritol kinase, found in Neisseria gonorrhoeae (strain NCCP11945).